We begin with the raw amino-acid sequence, 212 residues long: Neuroendocrine protein 7B2 (212 aa).

Positions 1 to 26 (MVSRMVSTMLSGLLFWLASGWTPAFA) are cleaved as a signal peptide. Cysteines 120 and 130 form a disulfide. A phosphoserine mark is found at Ser141 and Ser205. A disordered region spans residues 174-212 (GGERRKRRSVNPYLQGQRLDNVVAKKSVPHFSDEDKDPE).

The protein belongs to the 7B2 family. Interacts with PCSK2/PC2 early in the secretory pathway. Dissociation occurs at later stages. Proteolytically cleaved in the Golgi by a furin-like convertase to generate bioactive peptides. Post-translationally, sulfated on tyrosine residues.

The protein resides in the secreted. Acts as a molecular chaperone for PCSK2/PC2, preventing its premature activation in the regulated secretory pathway. Binds to inactive PCSK2 in the endoplasmic reticulum and facilitates its transport from there to later compartments of the secretory pathway where it is proteolytically matured and activated. Also required for cleavage of PCSK2 but does not appear to be involved in its folding. Plays a role in regulating pituitary hormone secretion. The C-terminal peptide inhibits PCSK2 in vitro. The polypeptide is Neuroendocrine protein 7B2 (SCG5) (Homo sapiens (Human)).